A 320-amino-acid polypeptide reads, in one-letter code: Protein rlx (320 aa).

Functionally, this protein is probably required for relaxation complex formation and plasmid mobilization by conjugative plasmids. In Staphylococcus aureus, this protein is Protein rlx (rlx).